A 466-amino-acid chain; its full sequence is 3-isopropylmalate dehydratase large subunit (466 aa).

The [4Fe-4S] cluster site is built by C347, C407, and C410.

Belongs to the aconitase/IPM isomerase family. LeuC type 1 subfamily. In terms of assembly, heterodimer of LeuC and LeuD. It depends on [4Fe-4S] cluster as a cofactor.

The catalysed reaction is (2R,3S)-3-isopropylmalate = (2S)-2-isopropylmalate. The protein operates within amino-acid biosynthesis; L-leucine biosynthesis; L-leucine from 3-methyl-2-oxobutanoate: step 2/4. Catalyzes the isomerization between 2-isopropylmalate and 3-isopropylmalate, via the formation of 2-isopropylmaleate. In Salmonella paratyphi A (strain ATCC 9150 / SARB42), this protein is 3-isopropylmalate dehydratase large subunit.